A 225-amino-acid chain; its full sequence is Probable CDP-diacylglycerol--inositol 3-phosphatidyltransferase 2 (225 aa).

2 helical membrane-spanning segments follow: residues 6–26 (PATLSVYLYIPNIVGYMRVLL) and 29–49 (IAFSVCFSNKTLFSLLYFFSF). The Mg(2+) site is built by Asp-52 and Asp-55. Residues Gly-56, Arg-60, and Ser-66 each contribute to the a CDP-1,2-diacyl-sn-glycerol site. Mg(2+) contacts are provided by Asp-73 and Asp-77. Asp-77 serves as the catalytic Proton acceptor. 3 helical membrane-spanning segments follow: residues 84 to 104 (LLVILSQIYRPSLVFLSLLAL), 143 to 163 (MFMGYCCVSCEVLYIILLLIA), and 184 to 204 (LSLLLALSIFGWSIKQIINVI).

The protein belongs to the CDP-alcohol phosphatidyltransferase class-I family. Requires Mg(2+) as cofactor. The cofactor is Mn(2+).

It is found in the membrane. It catalyses the reaction a CDP-1,2-diacyl-sn-glycerol + myo-inositol = a 1,2-diacyl-sn-glycero-3-phospho-(1D-myo-inositol) + CMP + H(+). Its function is as follows. Catalyzes the biosynthesis of phosphatidylinositol (PtdIns) as well as PtdIns:inositol exchange reaction. May thus act to reduce an excessive cellular PtdIns content. The exchange activity is due to the reverse reaction of PtdIns synthase and is dependent on CMP, which is tightly bound to the enzyme. This chain is Probable CDP-diacylglycerol--inositol 3-phosphatidyltransferase 2 (PIS2), found in Arabidopsis thaliana (Mouse-ear cress).